The sequence spans 449 residues: Glucose-6-phosphate isomerase (449 aa).

E291 serves as the catalytic Proton donor. Residues H312 and K426 contribute to the active site.

This sequence belongs to the GPI family.

Its subcellular location is the cytoplasm. It carries out the reaction alpha-D-glucose 6-phosphate = beta-D-fructose 6-phosphate. The protein operates within carbohydrate biosynthesis; gluconeogenesis. It participates in carbohydrate degradation; glycolysis; D-glyceraldehyde 3-phosphate and glycerone phosphate from D-glucose: step 2/4. Catalyzes the reversible isomerization of glucose-6-phosphate to fructose-6-phosphate. The chain is Glucose-6-phosphate isomerase from Streptococcus pyogenes serotype M5 (strain Manfredo).